The primary structure comprises 1130 residues: Integrin alpha-6 (1130 aa).

Positions 1 to 23 are cleaved as a signal peptide; it reads MAAAGQLCLLYLSAGLLSRLGAA. Topologically, residues 24 to 1050 are extracellular; it reads FNLDTREDNV…FPSKTVAQYS (1027 aa). FG-GAP repeat units follow at residues 30–95, 101–166, 176–229, 283–339, 340–402, 403–458, and 459–518; these read EDNV…GPCT, NDAD…IEDD, DGRL…FFDM, EQPD…KSAH, LLPE…RWNN, VKPI…GINT, and KPTQ…VTPN. N-linked (GlcNAc...) asparagine glycosylation is present at Asn78. Intrachain disulfides connect Cys86–Cys94, Cys131–Cys154, and Cys175–Cys188. N-linked (GlcNAc...) asparagine glycosylation is found at Asn223 and Asn323. The Ca(2+) site is built by Asp363, Asn365, Asp367, and Asp371. N-linked (GlcNAc...) asparagine glycosylation is present at Asn409. Residues Asp425, Asn427, Asp429, Tyr431, Asp433, Asp480, Asp482, Asn484, Tyr486, and Asp488 each coordinate Ca(2+). 4 disulfide bridges follow: Cys528–Cys535, Cys541–Cys601, Cys665–Cys671, and Cys765–Cys776. 4 N-linked (GlcNAc...) asparagine glycosylation sites follow: Asn770, Asn787, Asn930, and Asn966. Disulfide bonds link Cys920–Cys967 and Cys973–Cys978. A glycan (N-linked (GlcNAc...) asparagine) is linked at Asn997. Residues 1051 to 1076 traverse the membrane as a helical segment; the sequence is GVPWWIILVAILAGILMLALLVFILW. 2 positions are modified to phosphoserine: Val1059 and Gly1064. Residues 1077 to 1083 form an interaction with HPS5 region; sequence KCGFFKR. The Cytoplasmic segment spans residues 1077-1130; that stretch reads KCGFFKRSRYDDSVPRYHAVRIRKEEREIKDEKYIDNLEKKQWITKWNENESYS. Residue Cys1078 is the site of S-palmitoyl cysteine; by DHHC3 attachment. The GFFKR motif signature appears at 1079–1083; that stretch reads GFFKR. Arg1103 bears the Phosphoserine mark.

This sequence belongs to the integrin alpha chain family. As to quaternary structure, heterodimer of an alpha and a beta subunit. The alpha subunit is composed of a heavy and a light chain linked by a disulfide bond. Alpha-6 associates with either beta-1 (ITGB1) or beta-4 (ITGB4) to form ITGA6:ITGB1 and ITGA6:ITGB4, respectively. ITGA6:ITGB1 is found in a complex with CD9; interaction takes place in oocytes and is involved in sperm-egg fusion. ITGA6:ITGB4 is found in a ternary complex with NRG1 and ERBB3. ITGA6:ITGB4 is found in a ternary complex with IGF1 and IGF1R. ITGA6:ITGB4 interacts with IGF2. Interacts with ADAM9. Interacts with RAB21. Interacts with MDK. ITGA6:ITGB1 interacts with MDK; this interaction mediates MDK-induced neurite outgrowth. Interacts with CD82; this interaction down-regulates ITGA6-mediated cell adhesion. Isoforms containing segment A, but not segment B, are the major targets for PMA-induced phosphorylation. Phosphorylation occurs on 'Ser-1103' of isoform alpha-6X1X2A. Phosphorylation is not required for the induction of integrin alpha-6A/beta-1 high affinity but may reduce the affinity for ligand. In terms of processing, undergoes PLAU-mediated cleavage at residues Arg-634-635-Arg in a time-dependent manner to produce processed integrin alpha-6 (alpha6p). Production of alpha6p enhances prostate cancer cell invasion and migration. Post-translationally, palmitoylation by DHHC3 enhances stability and cell surface expression. As to expression, integrin alpha-6/beta-4 is predominantly expressed by epithelia. Isoforms containing segment X1 are ubiquitously expressed. Isoforms containing segment X1X2 are expressed in heart, kidney, placenta, colon, duodenum, myoblasts and myotubes, and in a limited number of cell lines; they are always coexpressed with the ubiquitous isoform containing segment X1. In some tissues (e.g. Salivary gland), isoforms containing cytoplasmic segment A and isoforms containing segment B are detected while in others, only isoforms containing one cytoplasmic segment are found (segment A in epidermis and segment B in kidney). Processed integrin alpha-6: Expressed at low levels in normal prostate tissue with elevated levels in prostate cancer tissue (at protein level).

The protein resides in the cell membrane. Its function is as follows. Integrin alpha-6/beta-1 (ITGA6:ITGB1) is a receptor for laminin on platelets. Integrin alpha-6/beta-1 (ITGA6:ITGB1) is present in oocytes and is involved in sperm-egg fusion. Integrin alpha-6/beta-4 (ITGA6:ITGB4) is a receptor for laminin in epithelial cells and it plays a critical structural role in the hemidesmosome. ITGA6:ITGB4 binds to NRG1 (via EGF domain) and this binding is essential for NRG1-ERBB signaling. ITGA6:ITGB4 binds to IGF1 and this binding is essential for IGF1 signaling. ITGA6:ITGB4 binds to IGF2 and this binding is essential for IGF2 signaling. This Homo sapiens (Human) protein is Integrin alpha-6 (ITGA6).